A 388-amino-acid chain; its full sequence is Peptide chain release factor subunit 1 (388 aa).

It belongs to the eukaryotic release factor 1 family. In terms of assembly, heterodimer of two subunits, one of which binds GTP.

The protein resides in the cytoplasm. Functionally, directs the termination of nascent peptide synthesis (translation) in response to the termination codons UAA, UAG and UGA. The sequence is that of Peptide chain release factor subunit 1 (prf1) from Pyrobaculum aerophilum (strain ATCC 51768 / DSM 7523 / JCM 9630 / CIP 104966 / NBRC 100827 / IM2).